The following is a 207-amino-acid chain: Cytochrome c biogenesis ATP-binding export protein CcmA (207 aa).

Residues 4–207 (LEARELLCER…RISLTQTGAA (204 aa)) enclose the ABC transporter domain. 36–43 (GSNGAGKT) serves as a coordination point for ATP.

This sequence belongs to the ABC transporter superfamily. CcmA exporter (TC 3.A.1.107) family. As to quaternary structure, the complex is composed of two ATP-binding proteins (CcmA) and two transmembrane proteins (CcmB).

It is found in the cell inner membrane. It carries out the reaction heme b(in) + ATP + H2O = heme b(out) + ADP + phosphate + H(+). Its function is as follows. Part of the ABC transporter complex CcmAB involved in the biogenesis of c-type cytochromes; once thought to export heme, this seems not to be the case, but its exact role is uncertain. Responsible for energy coupling to the transport system. This Escherichia coli (strain UTI89 / UPEC) protein is Cytochrome c biogenesis ATP-binding export protein CcmA.